Consider the following 602-residue polypeptide: Elongation factor 4 (602 aa).

In terms of domain architecture, tr-type G spans 7–189 (SQIRNFSIIA…AIVHRIPPPA (183 aa)). GTP-binding positions include 19 to 24 (DHGKST) and 136 to 139 (NKID).

It belongs to the TRAFAC class translation factor GTPase superfamily. Classic translation factor GTPase family. LepA subfamily.

It is found in the cell inner membrane. It catalyses the reaction GTP + H2O = GDP + phosphate + H(+). Its function is as follows. Required for accurate and efficient protein synthesis under certain stress conditions. May act as a fidelity factor of the translation reaction, by catalyzing a one-codon backward translocation of tRNAs on improperly translocated ribosomes. Back-translocation proceeds from a post-translocation (POST) complex to a pre-translocation (PRE) complex, thus giving elongation factor G a second chance to translocate the tRNAs correctly. Binds to ribosomes in a GTP-dependent manner. This is Elongation factor 4 from Gloeobacter violaceus (strain ATCC 29082 / PCC 7421).